The primary structure comprises 354 residues: Opsin-1, short-wave-sensitive 2 (354 aa).

Residues 1–43 (MKQQQQTPELFEDFHMPITLDVSNISAYSPFLVPQDHLGHSGV) lie on the Extracellular side of the membrane. An N-linked (GlcNAc...) asparagine glycan is attached at Asn-24. Residues 44–68 (FMGMSAFMLFLFIAGTAINVLTIVC) traverse the membrane as a helical segment. Topologically, residues 69–80 (TIQYKKLRSHLN) are cytoplasmic. A helical transmembrane segment spans residues 81–106 (YILVNLAISNLWVSVFGSSVAFYAFY). Over 107-120 (KKYFVFGPIGCKIE) the chain is Extracellular. The cysteines at positions 117 and 194 are disulfide-linked. The chain crosses the membrane as a helical span at residues 121–140 (GFTSTIGGMVSLWSLAVVAL). Topologically, residues 141 to 159 (ERWLVICKPLGNFTFKTPH) are cytoplasmic. The helical transmembrane segment at 160-183 (AIAGCILPWCMALAAGLPPLLGWS) threads the bilayer. Residues 184-209 (RYIPEGLQCSCGPDWYTTNNKFNNES) lie on the Extracellular side of the membrane. Residue Asn-207 is glycosylated (N-linked (GlcNAc...) asparagine). A helical membrane pass occupies residues 210–237 (YVMFLFCFCFAVPFSTIVFCYGQLLITL). Over 238-259 (KLAAKAQADSASTQKAEREVTK) the chain is Cytoplasmic. Residues 260–283 (MVVVMVFGFLICWGPYAIFAIWVV) traverse the membrane as a helical segment. Residues 284–291 (SNRGAPFD) are Extracellular-facing. Residues 292 to 316 (LRLATIPSCLCKASTVYNPVIYVLM) form a helical membrane-spanning segment. N6-(retinylidene)lysine is present on Lys-303. The Cytoplasmic segment spans residues 317–354 (NKQFRSCMMKMVFNKNIEEDEASSSSQVTQVSSVAPEK).

This sequence belongs to the G-protein coupled receptor 1 family. Opsin subfamily. In terms of processing, phosphorylated on some or all of the serine and threonine residues present in the C-terminal region. As to expression, retinal long single cone outer segments.

The protein localises to the membrane. In terms of biological role, visual pigments are the light-absorbing molecules that mediate vision. They consist of an apoprotein, opsin, covalently linked to cis-retinal. In Danio rerio (Zebrafish), this protein is Opsin-1, short-wave-sensitive 2 (opn1sw2).